A 113-amino-acid chain; its full sequence is Beta-microseminoprotein A1 (113 aa).

Residues 1–20 form the signal peptide; it reads MNVLLGGLVIFATFVTLCNG. Intrachain disulfides connect C22–C70, C38–C62, C57–C93, C60–C69, and C84–C107.

This sequence belongs to the beta-microseminoprotein family.

Its subcellular location is the secreted. This chain is Beta-microseminoprotein A1 (MSPA), found in Saguinus oedipus (Cotton-top tamarin).